The following is a 132-amino-acid chain: Myelin P2 protein (132 aa).

N-acetylserine is present on serine 2. (9Z)-octadecenoate contacts are provided by residues arginine 107 and 127-129 (RIY). Hexadecanoate contacts are provided by residues arginine 107 and 127–129 (RIY).

Belongs to the calycin superfamily. Fatty-acid binding protein (FABP) family. Monomer.

The protein localises to the cytoplasm. May play a role in lipid transport protein in Schwann cells. May bind cholesterol. The protein is Myelin P2 protein (Pmp2) of Mus musculus (Mouse).